A 339-amino-acid chain; its full sequence is Formyl peptide receptor-related sequence 6 (339 aa).

Topologically, residues 1–23 (MEANFSIPQNGSEVVFYDSTTSR) are extracellular. Asn4 and Asn10 each carry an N-linked (GlcNAc...) asparagine glycan. Residues 24–44 (VICIFLVVVLSITFLLGVIGN) traverse the membrane as a helical segment. Over 45–62 (GLVIYVAGFRMTHTVTTI) the chain is Cytoplasmic. A helical membrane pass occupies residues 63–85 (CYLNLALSDFSYMASLPFQITSI). The Extracellular portion of the chain corresponds to 86 to 99 (VMNGEWLFGWFLCK). Cys98 and Cys178 are joined by a disulfide. A helical membrane pass occupies residues 100-120 (FVHMIINVNLFLSIFLITFIA). Residues 121–144 (MDRCICVLHPVWAQNHRTVNVATK) lie on the Cytoplasmic side of the membrane. Residues 145–165 (VIFGAWILVLMLIFPHCIFVT) traverse the membrane as a helical segment. Residues 166–198 (TVKDESGKVHCICNFESWAATPEEQVKVSMTVS) are Extracellular-facing. A helical transmembrane segment spans residues 199 to 219 (LISVTISFIIGFSIPMIFIVI). At 220–241 (CYGLMAAKIGRRGFVNSSRPLR) the chain is on the cytoplasmic side. Residues 242–262 (VLTAVAISFFVCWFPFQLIFL) traverse the membrane as a helical segment. Over 263–280 (LGNIGNKETQNNIDTWVN) the chain is Extracellular. The helical transmembrane segment at 281–301 (TASTLASFNSCLNPILYVFLG) threads the bilayer. The Cytoplasmic segment spans residues 302–339 (QQFRERLIYSLSASLERALREDSALNSDKTRNLSSQRL).

This sequence belongs to the G-protein coupled receptor 1 family. Expressed exclusively in vomeronasal tissue. Expressed in 1.2 % of a subset of sensory neurons located in the apical layer of the vomeronasal organ. Each neuron appears to express only one receptor gene. Expressed in brain, spleen, skeletal muscle and at high level in testis.

The protein localises to the membrane. May have an olfactory function associated with the identification of pathogens or of pathogenic states. This is Formyl peptide receptor-related sequence 6 (Fpr-rs6) from Mus musculus (Mouse).